The following is a 199-amino-acid chain: Segregation and condensation protein B (199 aa).

This sequence belongs to the ScpB family. Homodimer. Homodimerization may be required to stabilize the binding of ScpA to the Smc head domains. Component of a cohesin-like complex composed of ScpA, ScpB and the Smc homodimer, in which ScpA and ScpB bind to the head domain of Smc. The presence of the three proteins is required for the association of the complex with DNA.

It localises to the cytoplasm. In terms of biological role, participates in chromosomal partition during cell division. May act via the formation of a condensin-like complex containing Smc and ScpA that pull DNA away from mid-cell into both cell halves. This is Segregation and condensation protein B from Leuconostoc mesenteroides subsp. mesenteroides (strain ATCC 8293 / DSM 20343 / BCRC 11652 / CCM 1803 / JCM 6124 / NCDO 523 / NBRC 100496 / NCIMB 8023 / NCTC 12954 / NRRL B-1118 / 37Y).